We begin with the raw amino-acid sequence, 108 residues long: Nucleoid-associated protein Bphy_0952 (108 aa).

Residues 87-108 (AQEKMGGMTSGLPLPPGFKLPF) form a disordered region. Residues 99-108 (PLPPGFKLPF) are compositionally biased toward pro residues.

This sequence belongs to the YbaB/EbfC family. Homodimer.

The protein localises to the cytoplasm. The protein resides in the nucleoid. Its function is as follows. Binds to DNA and alters its conformation. May be involved in regulation of gene expression, nucleoid organization and DNA protection. The sequence is that of Nucleoid-associated protein Bphy_0952 from Paraburkholderia phymatum (strain DSM 17167 / CIP 108236 / LMG 21445 / STM815) (Burkholderia phymatum).